A 238-amino-acid chain; its full sequence is MAFTFKQFHIDDMNCGMAVGTDSVVLGAWAQLTAAKTVLDIGAGSGLLSLMAAQRCQAHITSVELDTSAAEACQHNFHNSPWANRLTLVNSSIQEFCQQIEYQEYFDHIICNPPYFEQGTQAIQSQRAMARHTDSLSFTALLDAIHVCLAPQGNASLILPMQSMARLNEILAHSPLSLIEMTNLISIVGKSANRVLCVLAHKTHPQIATKISDITIRELSGQYTQTMVQLIRDFYLKY.

It belongs to the methyltransferase superfamily. tRNA (adenine-N(6)-)-methyltransferase family.

It localises to the cytoplasm. The enzyme catalyses adenosine(37) in tRNA1(Val) + S-adenosyl-L-methionine = N(6)-methyladenosine(37) in tRNA1(Val) + S-adenosyl-L-homocysteine + H(+). Its function is as follows. Specifically methylates the adenine in position 37 of tRNA(1)(Val) (anticodon cmo5UAC). The chain is tRNA1(Val) (adenine(37)-N6)-methyltransferase from Shewanella baltica (strain OS223).